A 621-amino-acid chain; its full sequence is Chaperone protein HscA homolog (621 aa).

It belongs to the heat shock protein 70 family.

Its function is as follows. Chaperone involved in the maturation of iron-sulfur cluster-containing proteins. Has a low intrinsic ATPase activity which is markedly stimulated by HscB. This chain is Chaperone protein HscA homolog, found in Acidithiobacillus ferrooxidans (strain ATCC 23270 / DSM 14882 / CIP 104768 / NCIMB 8455) (Ferrobacillus ferrooxidans (strain ATCC 23270)).